Here is a 564-residue protein sequence, read N- to C-terminus: Plant UBX domain-containing protein 8 (564 aa).

Residue alanine 2 is modified to N-acetylalanine. Positions 2–44 (ATPNQEAIDTFISITGASDAVALQKLEEHRGDLNQAVNAYFSE) constitute a UBA-like domain. UIM domains follow at residues 198–217 (IEEE…AEGS) and 230–249 (EDDD…AEEE). Residues 210 to 229 (SKKEAEGSSNPLLEERPLHM) are disordered. Disordered stretches follow at residues 267-358 (AVTA…EEHD), 371-423 (IPET…DKEM), and 443-483 (FLEE…QADE). Residues 291–300 (FDDDSDDVDE) are compositionally biased toward acidic residues. Phosphoserine is present on residues serine 295, serine 324, serine 326, and serine 328. A compositionally biased stretch (basic and acidic residues) spans 322-334 (DRSRSGSPEEEHA). A compositionally biased stretch (pro residues) spans 381–395 (FLPPQPRAQPRPPSP). The stretch at 412–478 (VASLQADRDK…DAKEASLPKE (67 aa)) forms a coiled coil. A compositionally biased stretch (basic and acidic residues) spans 443 to 475 (FLEEEKKKEEEAQRKLEEEQELERQLDAKEASL). One can recognise a UBX domain in the interval 482 to 560 (DEENAITLLI…GLTSKQEALF (79 aa)).

In terms of assembly, interacts with RABA5C/ARA-4.

In Arabidopsis thaliana (Mouse-ear cress), this protein is Plant UBX domain-containing protein 8.